A 161-amino-acid polypeptide reads, in one-letter code: Regulator of ribonuclease activity A (161 aa).

This sequence belongs to the RraA family. In terms of assembly, homotrimer. Binds to both RNA-binding sites in the C-terminal region of Rne and to RhlB.

It is found in the cytoplasm. In terms of biological role, globally modulates RNA abundance by binding to RNase E (Rne) and regulating its endonucleolytic activity. Can modulate Rne action in a substrate-dependent manner by altering the composition of the degradosome. Modulates RNA-binding and helicase activities of the degradosome. This chain is Regulator of ribonuclease activity A, found in Idiomarina loihiensis (strain ATCC BAA-735 / DSM 15497 / L2-TR).